We begin with the raw amino-acid sequence, 416 residues long: Multifunctional CCA protein (416 aa).

ATP-binding residues include G8 and R11. Residues G8 and R11 each coordinate CTP. Residues D21 and D23 each contribute to the Mg(2+) site. Positions 91, 137, and 140 each coordinate ATP. CTP contacts are provided by R91, R137, and R140. Positions 228 to 329 (TGLHTMLVLA…IKLFDKADFW (102 aa)) constitute an HD domain.

It belongs to the tRNA nucleotidyltransferase/poly(A) polymerase family. Bacterial CCA-adding enzyme type 1 subfamily. In terms of assembly, monomer. Can also form homodimers and oligomers. Mg(2+) serves as cofactor. Requires Ni(2+) as cofactor.

The catalysed reaction is a tRNA precursor + 2 CTP + ATP = a tRNA with a 3' CCA end + 3 diphosphate. The enzyme catalyses a tRNA with a 3' CCA end + 2 CTP + ATP = a tRNA with a 3' CCACCA end + 3 diphosphate. Functionally, catalyzes the addition and repair of the essential 3'-terminal CCA sequence in tRNAs without using a nucleic acid template. Adds these three nucleotides in the order of C, C, and A to the tRNA nucleotide-73, using CTP and ATP as substrates and producing inorganic pyrophosphate. tRNA 3'-terminal CCA addition is required both for tRNA processing and repair. Also involved in tRNA surveillance by mediating tandem CCA addition to generate a CCACCA at the 3' terminus of unstable tRNAs. While stable tRNAs receive only 3'-terminal CCA, unstable tRNAs are marked with CCACCA and rapidly degraded. This Shewanella sp. (strain ANA-3) protein is Multifunctional CCA protein.